A 519-amino-acid chain; its full sequence is MNINFSDVLVLGGISVSFLLAYQAIYFYFIYSPRAKKLGCALPPVFFSFPLGIPEVIRLVNAWFNDDLLEYFTFKFEEFQRKTGFQSVAGQLWIGTIEPENIKTMLATSFKDYSLGFRYEAMYGLLGNGIFTLSGEGWKHSRALLRPQFSREQVSHLESMRTHINMLINNHFKGGKVVDAQVLFHNLTIDTATEFLFGESTNTLDPALAQHGFPGPKGLVTGEQFAEAFTSALELLSVRVMAGAAWFLVWTPKFWRSCKVCHNFIDYFVFKALATPMEKDQEADRYVFIRELTKETSDPRVIRDQALNILLAGRDTTAALLSFTTYYLGAYPEVYDELREAVIADFGKEDAEPPTFEQLKQCKVLQNVIREVLRLHPNVPLNFREAITDTKFPTGGGPNGDQPVFVPKGQKVFYATYVMQRNEGLWGPDSTTFRPDRWNESREAIASGWDYIPFNGGPRICLGQQFALTEASYTLVRICQEFSRIEVLHPDVITSRNVMKQRMRLTNSSSGGVIAKFIR.

Residues Val-10–Ile-30 form a helical membrane-spanning segment. Residue Cys-461 coordinates heme.

Belongs to the cytochrome P450 family. The cofactor is heme.

Its subcellular location is the membrane. It carries out the reaction an omega-methyl-long-chain fatty acid + reduced [NADPH--hemoprotein reductase] + O2 = an omega-hydroxy-long-chain fatty acid + oxidized [NADPH--hemoprotein reductase] + H2O + H(+). It catalyses the reaction (9Z)-octadecenoate + reduced [NADPH--hemoprotein reductase] + O2 = 18-hydroxy-(9Z)-octadecenoate + oxidized [NADPH--hemoprotein reductase] + H2O + H(+). The enzyme catalyses hexadecanoate + reduced [NADPH--hemoprotein reductase] + O2 = 16-hydroxyhexadecanoate + oxidized [NADPH--hemoprotein reductase] + H2O + H(+). The catalysed reaction is (9Z)-hexadecenoate + reduced [NADPH--hemoprotein reductase] + O2 = (9Z)-16-hydroxyhexadec-9-enoate + oxidized [NADPH--hemoprotein reductase] + H2O + H(+). Catalyzes the terminal (at the omega-position) hydroxylation of a fatty acid. Probably involved in alkane metabolism. Has minor activity toward myristic acid, palmitic acid, palmitoleic acid and oleic acid. This chain is Cytochrome P450 52-E3, found in Starmerella bombicola (Yeast).